A 64-amino-acid chain; its full sequence is MEWKTCNFCGKSIEPGTGKKFVKKDGSVMFICSSKCEKNYKLKRVARKLRWTPIYYNNKHSNKK.

Zn(2+)-binding residues include Cys-6, Cys-9, Cys-32, and Cys-36. Residues 6–36 (CNFCGKSIEPGTGKKFVKKDGSVMFICSSKC) form a C4-type zinc finger.

Belongs to the eukaryotic ribosomal protein eL24 family. In terms of assembly, part of the 50S ribosomal subunit. Forms a cluster with proteins L3 and L14. Requires Zn(2+) as cofactor.

In terms of biological role, binds to the 23S rRNA. In Methanococcus aeolicus (strain ATCC BAA-1280 / DSM 17508 / OCM 812 / Nankai-3), this protein is Large ribosomal subunit protein eL24.